Here is a 60-residue protein sequence, read N- to C-terminus: Cytochrome c oxidase subunit 9, mitochondrial (60 aa).

Residues 1-15 (MSALAPITGTLKKRI) lie on the Mitochondrial matrix side of the membrane. Residues 16–38 (ITDIVIGFSLGGVMASYWWWGFH) traverse the membrane as a helical segment. Residues 39-57 (KNVIDRREAFYADLAEKKK) are Mitochondrial intermembrane-facing. Residues 58–60 (AEN) constitute a propeptide, removed in mature form.

The protein belongs to the fungal cytochrome c oxidase subunit 7a family. As to quaternary structure, component of the cytochrome c oxidase (complex IV, CIV), a multisubunit enzyme composed of a catalytic core of 3 subunits and several supernumerary subunits. The complex exists as a monomer or a dimer and forms supercomplexes (SCs) in the inner mitochondrial membrane with ubiquinol-cytochrome c oxidoreductase (cytochrome b-c1 complex, complex III, CIII).

It is found in the mitochondrion inner membrane. The protein operates within energy metabolism; oxidative phosphorylation. Component of the cytochrome c oxidase, the last enzyme in the mitochondrial electron transport chain which drives oxidative phosphorylation. The respiratory chain contains 3 multisubunit complexes succinate dehydrogenase (complex II, CII), ubiquinol-cytochrome c oxidoreductase (cytochrome b-c1 complex, complex III, CIII) and cytochrome c oxidase (complex IV, CIV), that cooperate to transfer electrons derived from NADH and succinate to molecular oxygen, creating an electrochemical gradient over the inner membrane that drives transmembrane transport and the ATP synthase. Cytochrome c oxidase is the component of the respiratory chain that catalyzes the reduction of oxygen to water. Electrons originating from reduced cytochrome c in the intermembrane space (IMS) are transferred via the dinuclear copper A center (CU(A)) of subunit 2 and heme A of subunit 1 to the active site in subunit 1, a binuclear center (BNC) formed by heme A3 and copper B (CU(B)). The BNC reduces molecular oxygen to 2 water molecules using 4 electrons from cytochrome c in the IMS and 4 protons from the mitochondrial matrix. This chain is Cytochrome c oxidase subunit 9, mitochondrial (COX9), found in Candida glabrata (strain ATCC 2001 / BCRC 20586 / JCM 3761 / NBRC 0622 / NRRL Y-65 / CBS 138) (Yeast).